A 324-amino-acid chain; its full sequence is Probable pectinesterase A (324 aa).

The signal sequence occupies residues 1-19; that stretch reads MHGSLLKLALLSFSLASSA. Gln-142 contacts substrate. The Proton donor role is filled by Asp-165. Residue Asp-186 is the Nucleophile of the active site. Substrate is bound by residues Arg-246 and Trp-248. The N-linked (GlcNAc...) asparagine glycan is linked to Asn-285.

Belongs to the pectinesterase family.

It localises to the secreted. It carries out the reaction [(1-&gt;4)-alpha-D-galacturonosyl methyl ester](n) + n H2O = [(1-&gt;4)-alpha-D-galacturonosyl](n) + n methanol + n H(+). It participates in glycan metabolism; pectin degradation; 2-dehydro-3-deoxy-D-gluconate from pectin: step 1/5. Its function is as follows. Involved in maceration and soft-rotting of plant tissue. The protein is Probable pectinesterase A (pmeA) of Aspergillus flavus (strain ATCC 200026 / FGSC A1120 / IAM 13836 / NRRL 3357 / JCM 12722 / SRRC 167).